The primary structure comprises 277 residues: MRSNVHQGHVARKRFGQNFLVDDTIIHGIVNAISPQAGDVLVEIGPGLGALTDPLLERIPQMQVVELDRDLVERLRRRYGERLQVHAGDALDFDFDKLAVPGRPLRIVGNLPYNISSPLLFHLMEFADHVHDQHFMLQKEVVERMVAEPGSKAFGRLSIMLQVRYYMEHVLDVPPGAFNPPPKVDSAVVRMIPWPRHGDGRLRSPHADCDITVLGDVVTAAFSQRRKVLRNTLSFLRDQVDFDAMGFDLGRRAEEVPVGEYVELARRLGDKASGQAA.

Asparagine 18, leucine 20, glycine 45, glutamate 66, aspartate 89, and asparagine 110 together coordinate S-adenosyl-L-methionine.

This sequence belongs to the class I-like SAM-binding methyltransferase superfamily. rRNA adenine N(6)-methyltransferase family. RsmA subfamily.

The protein localises to the cytoplasm. It catalyses the reaction adenosine(1518)/adenosine(1519) in 16S rRNA + 4 S-adenosyl-L-methionine = N(6)-dimethyladenosine(1518)/N(6)-dimethyladenosine(1519) in 16S rRNA + 4 S-adenosyl-L-homocysteine + 4 H(+). Its function is as follows. Specifically dimethylates two adjacent adenosines (A1518 and A1519) in the loop of a conserved hairpin near the 3'-end of 16S rRNA in the 30S particle. May play a critical role in biogenesis of 30S subunits. This chain is Ribosomal RNA small subunit methyltransferase A, found in Cupriavidus taiwanensis (strain DSM 17343 / BCRC 17206 / CCUG 44338 / CIP 107171 / LMG 19424 / R1) (Ralstonia taiwanensis (strain LMG 19424)).